Consider the following 227-residue polypeptide: Cytochrome c oxidase subunit 2 (227 aa).

Topologically, residues 1–14 are mitochondrial intermembrane; the sequence is MAHPVQLSLQDATS. The helical transmembrane segment at 15–45 threads the bilayer; it reads PVMEELITFHDHAFMAMSLISFLVLYALLST. At 46-59 the chain is on the mitochondrial matrix side; that stretch reads LTTKLTNTSITDAQ. Residues 60-87 form a helical membrane-spanning segment; it reads EMETIWTILPAIILILIALPSLRILYLT. Over 88–227 the chain is Mitochondrial intermembrane; it reads DEVNDPSFTI…IFEMGPVLTL (140 aa). 6 residues coordinate Cu cation: His-161, Cys-196, Glu-198, Cys-200, His-204, and Met-207. Glu-198 provides a ligand contact to Mg(2+).

Belongs to the cytochrome c oxidase subunit 2 family. As to quaternary structure, component of the cytochrome c oxidase (complex IV, CIV), a multisubunit enzyme composed of 14 subunits. The complex is composed of a catalytic core of 3 subunits MT-CO1, MT-CO2 and MT-CO3, encoded in the mitochondrial DNA, and 11 supernumerary subunits COX4I, COX5A, COX5B, COX6A, COX6B, COX6C, COX7A, COX7B, COX7C, COX8 and NDUFA4, which are encoded in the nuclear genome. The complex exists as a monomer or a dimer and forms supercomplexes (SCs) in the inner mitochondrial membrane with NADH-ubiquinone oxidoreductase (complex I, CI) and ubiquinol-cytochrome c oxidoreductase (cytochrome b-c1 complex, complex III, CIII), resulting in different assemblies (supercomplex SCI(1)III(2)IV(1) and megacomplex MCI(2)III(2)IV(2)). Found in a complex with TMEM177, COA6, COX18, COX20, SCO1 and SCO2. Interacts with TMEM177 in a COX20-dependent manner. Interacts with COX20. Interacts with COX16. It depends on Cu cation as a cofactor.

It localises to the mitochondrion inner membrane. The enzyme catalyses 4 Fe(II)-[cytochrome c] + O2 + 8 H(+)(in) = 4 Fe(III)-[cytochrome c] + 2 H2O + 4 H(+)(out). Its function is as follows. Component of the cytochrome c oxidase, the last enzyme in the mitochondrial electron transport chain which drives oxidative phosphorylation. The respiratory chain contains 3 multisubunit complexes succinate dehydrogenase (complex II, CII), ubiquinol-cytochrome c oxidoreductase (cytochrome b-c1 complex, complex III, CIII) and cytochrome c oxidase (complex IV, CIV), that cooperate to transfer electrons derived from NADH and succinate to molecular oxygen, creating an electrochemical gradient over the inner membrane that drives transmembrane transport and the ATP synthase. Cytochrome c oxidase is the component of the respiratory chain that catalyzes the reduction of oxygen to water. Electrons originating from reduced cytochrome c in the intermembrane space (IMS) are transferred via the dinuclear copper A center (CU(A)) of subunit 2 and heme A of subunit 1 to the active site in subunit 1, a binuclear center (BNC) formed by heme A3 and copper B (CU(B)). The BNC reduces molecular oxygen to 2 water molecules using 4 electrons from cytochrome c in the IMS and 4 protons from the mitochondrial matrix. The polypeptide is Cytochrome c oxidase subunit 2 (MT-CO2) (Macaca mulatta (Rhesus macaque)).